The chain runs to 472 residues: Bifunctional protein HldE (472 aa).

The ribokinase stretch occupies residues 1 to 315 (MAKRVKILVV…QLLNSSFGAN (315 aa)). Residue 192–195 (NKKE) coordinates ATP. D260 is a catalytic residue. Positions 340-472 (FTNGCFDILH…IKDAKNDDKK (133 aa)) are cytidylyltransferase.

In the N-terminal section; belongs to the carbohydrate kinase PfkB family. It in the C-terminal section; belongs to the cytidylyltransferase family. In terms of assembly, homodimer.

The enzyme catalyses D-glycero-beta-D-manno-heptose 7-phosphate + ATP = D-glycero-beta-D-manno-heptose 1,7-bisphosphate + ADP + H(+). It catalyses the reaction D-glycero-beta-D-manno-heptose 1-phosphate + ATP + H(+) = ADP-D-glycero-beta-D-manno-heptose + diphosphate. It functions in the pathway nucleotide-sugar biosynthesis; ADP-L-glycero-beta-D-manno-heptose biosynthesis; ADP-L-glycero-beta-D-manno-heptose from D-glycero-beta-D-manno-heptose 7-phosphate: step 1/4. It participates in nucleotide-sugar biosynthesis; ADP-L-glycero-beta-D-manno-heptose biosynthesis; ADP-L-glycero-beta-D-manno-heptose from D-glycero-beta-D-manno-heptose 7-phosphate: step 3/4. Its function is as follows. Catalyzes the phosphorylation of D-glycero-D-manno-heptose 7-phosphate at the C-1 position to selectively form D-glycero-beta-D-manno-heptose-1,7-bisphosphate. Functionally, catalyzes the ADP transfer from ATP to D-glycero-beta-D-manno-heptose 1-phosphate, yielding ADP-D-glycero-beta-D-manno-heptose. In Campylobacter concisus (strain 13826), this protein is Bifunctional protein HldE.